Consider the following 115-residue polypeptide: Small ribosomal subunit protein uS13 (115 aa).

Residues 92 to 115 (RRGLPVRGQNTKNNARTRKGSKRK) are disordered. The span at 106 to 115 (ARTRKGSKRK) shows a compositional bias: basic residues.

It belongs to the universal ribosomal protein uS13 family. In terms of assembly, part of the 30S ribosomal subunit. Forms a loose heterodimer with protein S19. Forms two bridges to the 50S subunit in the 70S ribosome.

Functionally, located at the top of the head of the 30S subunit, it contacts several helices of the 16S rRNA. In the 70S ribosome it contacts the 23S rRNA (bridge B1a) and protein L5 of the 50S subunit (bridge B1b), connecting the 2 subunits; these bridges are implicated in subunit movement. Contacts the tRNAs in the A and P-sites. This chain is Small ribosomal subunit protein uS13, found in Lactobacillus gasseri (strain ATCC 33323 / DSM 20243 / BCRC 14619 / CIP 102991 / JCM 1131 / KCTC 3163 / NCIMB 11718 / NCTC 13722 / AM63).